The following is a 108-amino-acid chain: Thiosulfate sulfurtransferase GlpE (108 aa).

The 89-residue stretch at 17-105 (HQGAAVLVDI…WHRHFPADVA (89 aa)) folds into the Rhodanese domain. The Cysteine persulfide intermediate role is filled by Cys-65.

Belongs to the GlpE family.

It localises to the cytoplasm. The enzyme catalyses thiosulfate + hydrogen cyanide = thiocyanate + sulfite + 2 H(+). The catalysed reaction is thiosulfate + [thioredoxin]-dithiol = [thioredoxin]-disulfide + hydrogen sulfide + sulfite + 2 H(+). Functionally, transferase that catalyzes the transfer of sulfur from thiosulfate to thiophilic acceptors such as cyanide or dithiols. May function in a CysM-independent thiosulfate assimilation pathway by catalyzing the conversion of thiosulfate to sulfite, which can then be used for L-cysteine biosynthesis. This chain is Thiosulfate sulfurtransferase GlpE, found in Salmonella arizonae (strain ATCC BAA-731 / CDC346-86 / RSK2980).